The following is a 173-amino-acid chain: 6,7-dimethyl-8-ribityllumazine synthase (173 aa).

5-amino-6-(D-ribitylamino)uracil-binding positions include F24, A58–E60, and A82–I84. E87–T88 contacts (2S)-2-hydroxy-3-oxobutyl phosphate. The active-site Proton donor is the H90. N115 contacts 5-amino-6-(D-ribitylamino)uracil. R129 is a (2S)-2-hydroxy-3-oxobutyl phosphate binding site. A disordered region spans residues A150 to R173. The span at E152–R173 shows a compositional bias: acidic residues.

The protein belongs to the DMRL synthase family.

The catalysed reaction is (2S)-2-hydroxy-3-oxobutyl phosphate + 5-amino-6-(D-ribitylamino)uracil = 6,7-dimethyl-8-(1-D-ribityl)lumazine + phosphate + 2 H2O + H(+). It functions in the pathway cofactor biosynthesis; riboflavin biosynthesis; riboflavin from 2-hydroxy-3-oxobutyl phosphate and 5-amino-6-(D-ribitylamino)uracil: step 1/2. Its function is as follows. Catalyzes the formation of 6,7-dimethyl-8-ribityllumazine by condensation of 5-amino-6-(D-ribitylamino)uracil with 3,4-dihydroxy-2-butanone 4-phosphate. This is the penultimate step in the biosynthesis of riboflavin. The protein is 6,7-dimethyl-8-ribityllumazine synthase of Bordetella pertussis (strain Tohama I / ATCC BAA-589 / NCTC 13251).